Here is a 414-residue protein sequence, read N- to C-terminus: Arrestin domain-containing protein 3 (414 aa).

2 consecutive short sequence motifs (PPxY motif) follow at residues 346–349 (PPSY) and 391–394 (PPLY). The tract at residues 393–414 (LYSEIDPNPDQSADDRPSCPSR) is disordered. Over residues 405 to 414 (ADDRPSCPSR) the composition is skewed to basic and acidic residues.

Belongs to the arrestin family. In terms of assembly, interacts (via PPxY motifs) with NEDD4 (via WW domains). Interacts with ADRB2. Interacts with ADRB3. Interacts with HGS (via PPxY motifs). Does not bind TXN (thioredoxin). Interacts with ITCH.

Its subcellular location is the cytoplasm. The protein localises to the cell membrane. It is found in the lysosome. The protein resides in the endosome. It localises to the early endosome. Adapter protein that plays a role in regulating cell-surface expression of adrenergic receptors and probably also other G protein-coupled receptors. Plays a role in NEDD4-mediated ubiquitination and endocytosis af activated ADRB2 and subsequent ADRB2 degradation. May recruit NEDD4 to ADRB2. Alternatively, may function as adapter protein that does not play a major role in recruiting NEDD4 to ADRB2, but rather plays a role in a targeting ADRB2 to endosomes. This chain is Arrestin domain-containing protein 3 (ARRDC3), found in Pongo abelii (Sumatran orangutan).